The sequence spans 612 residues: uncharacterized protein (612 aa).

The 68-residue stretch at 8 to 75 (ELYLALGLPK…SKKEIYDNFG (68 aa)) folds into the J domain. Residues 445 to 465 (AVFWGLVFPITSILGVEQFFL) form a helical membrane-spanning segment.

Belongs to the DnaJ family.

The protein resides in the membrane. This is an uncharacterized protein from Schizosaccharomyces pombe (strain 972 / ATCC 24843) (Fission yeast).